We begin with the raw amino-acid sequence, 365 residues long: Cobalt-precorrin-5B C(1)-methyltransferase (365 aa).

The protein belongs to the CbiD family.

The catalysed reaction is Co-precorrin-5B + S-adenosyl-L-methionine = Co-precorrin-6A + S-adenosyl-L-homocysteine. Its pathway is cofactor biosynthesis; adenosylcobalamin biosynthesis; cob(II)yrinate a,c-diamide from sirohydrochlorin (anaerobic route): step 6/10. Catalyzes the methylation of C-1 in cobalt-precorrin-5B to form cobalt-precorrin-6A. The chain is Cobalt-precorrin-5B C(1)-methyltransferase from Variovorax paradoxus (strain S110).